The following is a 285-amino-acid chain: NAD kinase (285 aa).

Asp-68 serves as the catalytic Proton acceptor. NAD(+) is bound by residues 68–69, 142–143, Arg-153, Lys-170, Asp-172, and Gln-242; these read DG and ND.

The protein belongs to the NAD kinase family. The cofactor is a divalent metal cation.

It is found in the cytoplasm. The enzyme catalyses NAD(+) + ATP = ADP + NADP(+) + H(+). Functionally, involved in the regulation of the intracellular balance of NAD and NADP, and is a key enzyme in the biosynthesis of NADP. Catalyzes specifically the phosphorylation on 2'-hydroxyl of the adenosine moiety of NAD to yield NADP. This is NAD kinase from Koribacter versatilis (strain Ellin345).